The chain runs to 55 residues: Large ribosomal subunit protein bL33 (55 aa).

It belongs to the bacterial ribosomal protein bL33 family.

The sequence is that of Large ribosomal subunit protein bL33 from Aeromonas hydrophila subsp. hydrophila (strain ATCC 7966 / DSM 30187 / BCRC 13018 / CCUG 14551 / JCM 1027 / KCTC 2358 / NCIMB 9240 / NCTC 8049).